The following is a 310-amino-acid chain: Acetyl-coenzyme A carboxylase carboxyl transferase subunit beta (310 aa).

The region spanning 27-296 is the CoA carboxyltransferase N-terminal domain; the sequence is LWRKCPNCEA…QDRDAEPDDT (270 aa). The Zn(2+) site is built by Cys31, Cys34, Cys50, and Cys53. Residues 31–53 form a C4-type zinc finger; sequence CPNCEAVLYLPELERHQSVCPKC. The segment at 282-310 is disordered; the sequence is THQPHQDRDAEPDDTASQSTLDEFSQADH.

This sequence belongs to the AccD/PCCB family. In terms of assembly, acetyl-CoA carboxylase is a heterohexamer composed of biotin carboxyl carrier protein (AccB), biotin carboxylase (AccC) and two subunits each of ACCase subunit alpha (AccA) and ACCase subunit beta (AccD). The cofactor is Zn(2+).

It localises to the cytoplasm. It carries out the reaction N(6)-carboxybiotinyl-L-lysyl-[protein] + acetyl-CoA = N(6)-biotinyl-L-lysyl-[protein] + malonyl-CoA. The protein operates within lipid metabolism; malonyl-CoA biosynthesis; malonyl-CoA from acetyl-CoA: step 1/1. Component of the acetyl coenzyme A carboxylase (ACC) complex. Biotin carboxylase (BC) catalyzes the carboxylation of biotin on its carrier protein (BCCP) and then the CO(2) group is transferred by the transcarboxylase to acetyl-CoA to form malonyl-CoA. This is Acetyl-coenzyme A carboxylase carboxyl transferase subunit beta from Chromohalobacter salexigens (strain ATCC BAA-138 / DSM 3043 / CIP 106854 / NCIMB 13768 / 1H11).